Here is a 657-residue protein sequence, read N- to C-terminus: Leishmanolysin (657 aa).

The N-terminal stretch at 1–41 (MSVDSSSSSTHRRRCVAARLVRLAAAGAAVTVAVGTAAAWA) is a signal peptide. The propeptide at 42–102 (HAGALQHRCI…DPRPGSAPTV (61 aa)) is activation peptide. At 44–611 (GALQHRCIHD…DRMVGLATAA (568 aa)) the chain is on the extracellular side. N-linked (GlcNAc...) asparagine glycosylation is present at Asn-107. Cystine bridges form between Cys-127–Cys-144 and Cys-193–Cys-232. His-266 lines the Zn(2+) pocket. Residue Glu-267 is part of the active site. His-270 contributes to the Zn(2+) binding site. A glycan (N-linked (GlcNAc...) asparagine) is linked at Asn-302. 7 cysteine pairs are disulfide-bonded: Cys-316/Cys-388, Cys-395/Cys-458, Cys-408/Cys-427, Cys-417/Cys-492, Cys-469/Cys-513, Cys-518/Cys-568, and Cys-538/Cys-561. His-336 is a binding site for Zn(2+). N-linked (GlcNAc...) asparagine glycosylation is found at Asn-399, Asn-409, Asn-445, Asn-466, and Asn-501. The chain crosses the membrane as a helical span at residues 612–632 (TVLLGMVLSLMALVVVWLLLV). The Cytoplasmic portion of the chain corresponds to 633–657 (SCPWWCCKLGGPPASVTPACSPETE).

The protein belongs to the peptidase M8 family. Zn(2+) is required as a cofactor.

It is found in the membrane. The catalysed reaction is Preference for hydrophobic residues at P1 and P1' and basic residues at P2' and P3'. A model nonapeptide is cleaved at -Ala-Tyr-|-Leu-Lys-Lys-.. Has an integral role during the infection of macrophages in the mammalian host. This is Leishmanolysin (mspC) from Leishmania tropica.